A 255-amino-acid polypeptide reads, in one-letter code: Glutamate racemase (255 aa).

Residues Asp7–Ser8 and Tyr39–Gly40 contribute to the substrate site. Residue Cys70 is the Proton donor/acceptor of the active site. Substrate is bound at residue Asn71–Thr72. Cys181 serves as the catalytic Proton donor/acceptor. A substrate-binding site is contributed by Thr182–His183.

It belongs to the aspartate/glutamate racemases family. Homodimer.

The enzyme catalyses L-glutamate = D-glutamate. It participates in cell wall biogenesis; peptidoglycan biosynthesis. Its function is as follows. Provides the (R)-glutamate required for cell wall biosynthesis. The chain is Glutamate racemase from Helicobacter pylori (strain J99 / ATCC 700824) (Campylobacter pylori J99).